The sequence spans 74 residues: uncharacterized protein (74 aa).

The helical transmembrane segment at 52–72 threads the bilayer; it reads ITFGFTVLGLGIGMIFGDAGL.

It is found in the membrane. This is an uncharacterized protein from Methanocaldococcus jannaschii (strain ATCC 43067 / DSM 2661 / JAL-1 / JCM 10045 / NBRC 100440) (Methanococcus jannaschii).